Consider the following 932-residue polypeptide: Protocadherin gamma-A12 (932 aa).

Positions 1–29 (MIPARLHRDYKGLVLLGILLGTLWETGCT) are cleaved as a signal peptide. 6 Cadherin domains span residues 30–133 (QIRY…APYF), 134–242 (RESE…APAF), 243–347 (AQPE…APEV), 348–452 (VLTS…PPVF), 453–562 (PQAS…APEI), and 570–683 (DGST…SPAN). The Extracellular portion of the chain corresponds to 30-692 (QIRYSVPEEL…NSETSDLTLY (663 aa)). 3 N-linked (GlcNAc...) asparagine glycosylation sites follow: asparagine 265, asparagine 419, and asparagine 545. Residues 693–713 (LVVAVAAVSCVFLAFVILLLA) form a helical membrane-spanning segment. Residues 714–932 (LRLRRWHKSR…KKKSGKKEKK (219 aa)) are Cytoplasmic-facing. Disordered stretches follow at residues 803–841 (GHGLIEQAPPNTDWRFSQAQRPGTSGSQNGDDTGTWPNN) and 902–932 (ATLTNAAGKRDGKAPAGGNGNKKKSGKKEKK). Residues 816-841 (WRFSQAQRPGTSGSQNGDDTGTWPNN) are compositionally biased toward polar residues. Over residues 922 to 932 (NKKKSGKKEKK) the composition is skewed to basic residues.

Its subcellular location is the cell membrane. Functionally, potential calcium-dependent cell-adhesion protein. May be involved in the establishment and maintenance of specific neuronal connections in the brain. The chain is Protocadherin gamma-A12 (PCDHGA12) from Pan troglodytes (Chimpanzee).